A 413-amino-acid polypeptide reads, in one-letter code: Elongation factor 1-alpha (413 aa).

Residues 5 to 211 form the tr-type G domain; that stretch reads KTHMNLAFIG…DALDEPDKPV (207 aa). Residues 14 to 21 form a G1 region; that stretch reads GHVDHGKS. Residue 14 to 21 participates in GTP binding; it reads GHVDHGKS. Residue Ser-21 coordinates Mg(2+). Residues 60–64 are G2; sequence GVTID. The tract at residues 81–84 is G3; the sequence is DCPG. GTP contacts are provided by residues 81 to 85 and 136 to 139; these read DCPGH and NKMD. The interval 136–139 is G4; that stretch reads NKMD. Residues 175 to 177 are G5; the sequence is SAF.

The protein belongs to the TRAFAC class translation factor GTPase superfamily. Classic translation factor GTPase family. EF-Tu/EF-1A subfamily.

It is found in the cytoplasm. It carries out the reaction GTP + H2O = GDP + phosphate + H(+). In terms of biological role, GTP hydrolase that promotes the GTP-dependent binding of aminoacyl-tRNA to the A-site of ribosomes during protein biosynthesis. The polypeptide is Elongation factor 1-alpha (Methanosphaera stadtmanae (strain ATCC 43021 / DSM 3091 / JCM 11832 / MCB-3)).